Reading from the N-terminus, the 449-residue chain is tRNA (guanine(37)-N(1))-methyltransferase (449 aa).

S-adenosyl-L-methionine is bound by residues His-216, 254-255, 282-283, and Asn-345; these read DL and DG.

Belongs to the class I-like SAM-binding methyltransferase superfamily. TRM5/TYW2 family. Monomer.

It localises to the mitochondrion matrix. The protein localises to the nucleus. It is found in the cytoplasm. The catalysed reaction is guanosine(37) in tRNA + S-adenosyl-L-methionine = N(1)-methylguanosine(37) in tRNA + S-adenosyl-L-homocysteine + H(+). Functionally, specifically methylates the N1 position of guanosine-37 in various cytoplasmic and mitochondrial tRNAs. Methylation is not dependent on the nature of the nucleoside 5' of the target nucleoside. This is the first step in the biosynthesis of wybutosine (yW), a modified base adjacent to the anticodon of tRNAs and required for accurate decoding. This chain is tRNA (guanine(37)-N(1))-methyltransferase, found in Candida albicans (strain WO-1) (Yeast).